The primary structure comprises 128 residues: MSDVFDIIRFNDQGLVTAIAQQHDTGEVLMLAWMNREAIEETLATGRVCYFSRSRNGLWRKGETSGQVQTLIELRVDCDGDALLVLVDQPGVACHTGRRSCFYRAMGKDGTVTTLTEPLIDPHTLYGS.

Aspartate 77 contacts Mg(2+). Residue cysteine 78 participates in Zn(2+) binding. Aspartate 79 and aspartate 81 together coordinate Mg(2+). Zn(2+) contacts are provided by cysteine 94 and cysteine 101.

The protein belongs to the PRA-CH family. Homodimer. Mg(2+) serves as cofactor. Zn(2+) is required as a cofactor.

It is found in the cytoplasm. It catalyses the reaction 1-(5-phospho-beta-D-ribosyl)-5'-AMP + H2O = 1-(5-phospho-beta-D-ribosyl)-5-[(5-phospho-beta-D-ribosylamino)methylideneamino]imidazole-4-carboxamide. The protein operates within amino-acid biosynthesis; L-histidine biosynthesis; L-histidine from 5-phospho-alpha-D-ribose 1-diphosphate: step 3/9. Functionally, catalyzes the hydrolysis of the adenine ring of phosphoribosyl-AMP. The protein is Phosphoribosyl-AMP cyclohydrolase of Granulibacter bethesdensis (strain ATCC BAA-1260 / CGDNIH1).